The following is a 2390-amino-acid chain: Spectrin beta chain, non-erythrocytic 2 (2390 aa).

Ser2 carries the post-translational modification N-acetylserine. The actin-binding stretch occupies residues 2 to 278; that stretch reads SSTLSPTDFD…IITYVATYYH (277 aa). A phosphoserine mark is found at Ser6 and Ser31. Calponin-homology (CH) domains lie at 57-161 and 176-281; these read AVQK…LRFQ and KSAK…HYFS. Spectrin repeat units lie at residues 306–414, 427–527, 532–639, 642–744, 749–849, and 855–954; these read LVEK…LALR, AARF…RERL, ELQK…RLEE, RLWR…QRLA, LYQF…RALE, and YTML…KAAL. Ser959 carries the post-translational modification Phosphoserine. Spectrin repeat units lie at residues 960–1063, 1066–1169, 1174–1262, 1279–1379, 1384–1485, 1489–1586, 1589–1692, 1696–1797, 1801–1904, 1910–2010, and 2017–2076; these read IQNY…SLGE, RLQD…GRLA, FQGF…RHKK, EQQH…ARSL, RAEL…RRLQ, EQHQ…RLED, RAQQ…RLQE, LCQL…GQVL, YELQ…QLLL, FRFF…DWLQ, and VFGR…EKLT. Ser1073 carries the phosphoserine modification. Basic and acidic residues predominate over residues 2081–2096; sequence REKERKRKREEEERRK. 2 disordered regions span residues 2081-2222 and 2331-2390; these read REKE…EQME and SSAS…KKNK. A compositionally biased stretch (polar residues) spans 2116–2125; it reads QTASDTTWDG. Residues Ser2171 and Ser2199 each carry the phosphoserine modification. The 111-residue stretch at 2218 to 2328 folds into the PH domain; that stretch reads QEQMEGMLCR…WLRVVNAAIA (111 aa). The residue at position 2354 (Thr2354) is a Phosphothreonine. Ser2359 is modified (phosphoserine). Basic and acidic residues predominate over residues 2370–2383; the sequence is RSKDGREREREKRF.

Belongs to the spectrin family. In terms of tissue distribution, highly expressed in brain, kidney, pancreas, and liver, and at lower levels in lung and placenta.

The protein localises to the cytoplasm. Its subcellular location is the cytoskeleton. It localises to the cell cortex. Probably plays an important role in neuronal membrane skeleton. This chain is Spectrin beta chain, non-erythrocytic 2 (SPTBN2), found in Homo sapiens (Human).